We begin with the raw amino-acid sequence, 472 residues long: Siroheme synthase 1 (472 aa).

The interval 1 to 203 (MDYLPLFADL…GQLTEAENEL (203 aa)) is precorrin-2 dehydrogenase /sirohydrochlorin ferrochelatase. Residues 22–23 (EV) and 43–44 (QT) contribute to the NAD(+) site. Serine 128 carries the phosphoserine modification. The interval 215–472 (GEVALVGAGP…AISPSVVNLA (258 aa)) is uroporphyrinogen-III C-methyltransferase. Residue proline 224 participates in S-adenosyl-L-methionine binding. The active-site Proton acceptor is the aspartate 247. The active-site Proton donor is lysine 269. Residues 300 to 302 (GGD), isoleucine 305, 330 to 331 (TA), methionine 382, and glycine 411 contribute to the S-adenosyl-L-methionine site.

This sequence in the N-terminal section; belongs to the precorrin-2 dehydrogenase / sirohydrochlorin ferrochelatase family. The protein in the C-terminal section; belongs to the precorrin methyltransferase family.

It carries out the reaction uroporphyrinogen III + 2 S-adenosyl-L-methionine = precorrin-2 + 2 S-adenosyl-L-homocysteine + H(+). The enzyme catalyses precorrin-2 + NAD(+) = sirohydrochlorin + NADH + 2 H(+). The catalysed reaction is siroheme + 2 H(+) = sirohydrochlorin + Fe(2+). It participates in cofactor biosynthesis; adenosylcobalamin biosynthesis; precorrin-2 from uroporphyrinogen III: step 1/1. The protein operates within cofactor biosynthesis; adenosylcobalamin biosynthesis; sirohydrochlorin from precorrin-2: step 1/1. Its pathway is porphyrin-containing compound metabolism; siroheme biosynthesis; precorrin-2 from uroporphyrinogen III: step 1/1. It functions in the pathway porphyrin-containing compound metabolism; siroheme biosynthesis; siroheme from sirohydrochlorin: step 1/1. It participates in porphyrin-containing compound metabolism; siroheme biosynthesis; sirohydrochlorin from precorrin-2: step 1/1. Functionally, multifunctional enzyme that catalyzes the SAM-dependent methylations of uroporphyrinogen III at position C-2 and C-7 to form precorrin-2 via precorrin-1. Then it catalyzes the NAD-dependent ring dehydrogenation of precorrin-2 to yield sirohydrochlorin. Finally, it catalyzes the ferrochelation of sirohydrochlorin to yield siroheme. This is Siroheme synthase 1 from Yersinia pseudotuberculosis serotype I (strain IP32953).